Reading from the N-terminus, the 387-residue chain is Phosphoglycerate kinase (387 aa).

Residues 21–23 (DLN), arginine 36, 59–62 (HLGR), arginine 113, and arginine 146 each bind substrate. Residues lysine 197, glutamate 314, and 340-343 (GGDT) contribute to the ATP site.

Belongs to the phosphoglycerate kinase family. As to quaternary structure, monomer.

It localises to the cytoplasm. It carries out the reaction (2R)-3-phosphoglycerate + ATP = (2R)-3-phospho-glyceroyl phosphate + ADP. Its pathway is carbohydrate degradation; glycolysis; pyruvate from D-glyceraldehyde 3-phosphate: step 2/5. The polypeptide is Phosphoglycerate kinase (Yersinia pestis bv. Antiqua (strain Antiqua)).